The sequence spans 367 residues: Peptide chain release factor 1 (367 aa).

Glutamine 243 is subject to N5-methylglutamine.

This sequence belongs to the prokaryotic/mitochondrial release factor family. Methylated by PrmC. Methylation increases the termination efficiency of RF1.

Its subcellular location is the cytoplasm. Peptide chain release factor 1 directs the termination of translation in response to the peptide chain termination codons UAG and UAA. The sequence is that of Peptide chain release factor 1 from Acidovorax ebreus (strain TPSY) (Diaphorobacter sp. (strain TPSY)).